Reading from the N-terminus, the 273-residue chain is Shikimate dehydrogenase (NADP(+)) (273 aa).

Shikimate is bound by residues 15–17 (SLS) and T62. K66 serves as the catalytic Proton acceptor. NADP(+) is bound at residue E78. Residues N87 and D102 each coordinate shikimate. Residues 126–130 (GAGGA), 150–155 (NRTIEK), and I217 each bind NADP(+). Residue Y219 participates in shikimate binding. G240 contributes to the NADP(+) binding site.

The protein belongs to the shikimate dehydrogenase family. Homodimer.

It carries out the reaction shikimate + NADP(+) = 3-dehydroshikimate + NADPH + H(+). It functions in the pathway metabolic intermediate biosynthesis; chorismate biosynthesis; chorismate from D-erythrose 4-phosphate and phosphoenolpyruvate: step 4/7. Involved in the biosynthesis of the chorismate, which leads to the biosynthesis of aromatic amino acids. Catalyzes the reversible NADPH linked reduction of 3-dehydroshikimate (DHSA) to yield shikimate (SA). In Nitrosopumilus maritimus (strain SCM1), this protein is Shikimate dehydrogenase (NADP(+)).